The following is a 1501-amino-acid chain: Neither inactivation nor afterpotential protein C (1501 aa).

The 267-residue stretch at 16 to 282 folds into the Protein kinase domain; the sequence is FEIYEEIAQG…MVEMVEHPFL (267 aa). ATP-binding positions include 22–30 and Lys45; that span reads IAQGVNAKV. The active-site Proton acceptor is the Asp145. Ser183 carries the post-translational modification Phosphoserine. The region spanning 332 to 1037 is the Myosin motor domain; sequence MYPEDLAALE…FLARLYELQV (706 aa). The segment at 913-934 is actin-binding; sequence LTLLKMLSQNANLGVHFVRCIR. IQ domains are found at residues 1036–1065 and 1072–1101; these read QVKK…FKLG and HDVA…EKSG. The tract at residues 1043–1271 is interaction with rtp; it reads VQSMMRALLA…RMGESDNIYN (229 aa). Residues 1066-1501 are non alpha-helical, C-terminal domain; that stretch reads KKGPEHHDVA…ITLSGYAVDI (436 aa). Disordered regions lie at residues 1308-1364 and 1390-1473; these read NWGV…DPVR and KTNY…EDSN. Over residues 1326 to 1335 the composition is skewed to pro residues; that stretch reads APPPPPPPMP. Residues 1336-1358 show a composition bias toward low complexity; the sequence is SSNYYRNNPNQQQRNYQQRSSYP. Residues 1405-1414 are compositionally biased toward basic and acidic residues; the sequence is NNRRGSDSGD. The segment covering 1449–1463 has biased composition (polar residues); sequence FGQQQRAPTLRQSPA.

The protein in the C-terminal section; belongs to the TRAFAC class myosin-kinesin ATPase superfamily. Myosin family. This sequence in the N-terminal section; belongs to the protein kinase superfamily. Ser/Thr protein kinase family. In terms of assembly, interacts with rtp. Expressed in the phototransducing compartment of photoreceptor cells, the rhabdomeres (at protein level).

Its subcellular location is the cytoplasm. The protein localises to the cytoskeleton. The protein resides in the nucleus. It localises to the membrane. It is found in the cell projection. Its subcellular location is the rhabdomere membrane. It catalyses the reaction L-seryl-[protein] + ATP = O-phospho-L-seryl-[protein] + ADP + H(+). It carries out the reaction L-threonyl-[protein] + ATP = O-phospho-L-threonyl-[protein] + ADP + H(+). Its function is as follows. Required for photoreceptor cell function. The ninaC proteins combines putative serine/threonine-protein kinase and myosin activities. Essential for the expression and stability of the rtp protein in the photoreceptors. The rtp/ninaC complex is required for stability of inad and inac and the normal termination of phototransduction in the retina. The protein is Neither inactivation nor afterpotential protein C (ninaC) of Drosophila melanogaster (Fruit fly).